The chain runs to 343 residues: C-X-C chemokine receptor type 6 (343 aa).

The Extracellular portion of the chain corresponds to 1–33 (MAEYDHYEDDGFLNSFNDSSQEEHQDFLQFRKV). Residue N17 is glycosylated (N-linked (GlcNAc...) asparagine). A helical transmembrane segment spans residues 34-60 (FLPCMYLVVFVCGLVGNSLVLVISIFY). Residues 61–69 (HKLQSLTDV) lie on the Cytoplasmic side of the membrane. Residues 70-90 (FLVNLPLADLVFVCTLPFWTY) traverse the membrane as a helical segment. Residues 91–104 (AGIHEWIFGQVMCK) lie on the Extracellular side of the membrane. C103 and C181 are disulfide-bonded. The helical transmembrane segment at 105–126 (TLLGVYTINFYTSMLILTCITV) threads the bilayer. Residues 127-144 (DRFIVVVKATKAYNQQAK) are Cytoplasmic-facing. Residues 145-165 (RMTWGKVICLLIWVISLLVSL) traverse the membrane as a helical segment. At 166-188 (PQIIYGNVFNLDKLICGYHDEEI) the chain is on the extracellular side. The helical transmembrane segment at 189-216 (STVVLATQMTLGFFLPLLAMIVCYSVII) threads the bilayer. Over 217 to 232 (KTLLHAGGFQKHRSLK) the chain is Cytoplasmic. Residues 233–260 (IIFLVMAVFLLTQTPFNLVKLIRSTRWE) form a helical membrane-spanning segment. Topologically, residues 261–276 (YYAMTSFHYTIIVTEA) are extracellular. The chain crosses the membrane as a helical span at residues 277-294 (IAYLRACLNPVLYAFVSL). The Cytoplasmic portion of the chain corresponds to 295–343 (KFRKNFWKLVKDIGCLPYLGVSHQWKSSEDNSKTFSASHNVEATSMFQL).

The protein belongs to the G-protein coupled receptor 1 family.

It is found in the cell membrane. In terms of biological role, receptor for the C-X-C chemokine CXCL16. Used as a coreceptor by SIVs and by strains of HIV-2 and m-tropic HIV-1. In Macaca fascicularis (Crab-eating macaque), this protein is C-X-C chemokine receptor type 6 (CXCR6).